Reading from the N-terminus, the 601-residue chain is MSTPQNRIRNFCIIAHIDHGKSTLADRILEETGALSQREMTEQVLDKMDLERERGITIKLQAVRLFHRAEDGQEYQLNLIDTPGHVDFTYEVSRSLAACEGALLVVDASQGIEAQTLANVYLALENDLEIIPVINKIDLPSAEPERVKQEIEDVIGLDTSEAVLASAKTGAGIKEILEQVVTKIAPPKGDSEAPLQALIFDSHYDAYRGVIAYIRVVQGTLKPGMRIRMMATKKEFEVTEVGVFTPHMTFVDELKTGEVGLVAASMKNVQDVRVGDTITAAQNPAPAPLPGYRKVTPMVFCGLYPVDTVDYEDLRDALDKLKLNDASLIYEPETSDALGFGFRCGFLGLLHMEIIQERLEREYGLSLITTAPSVVYRVTTTKGEVMEIDNPANLPQVNKIEIIEEPFVKATVMVPKDFVGTVMDLCQGKRGIFSNMEYLGINRVMLTYEIPLSEIIYDFFDQLKSRTKGYASLDYEMIGYRQSELVKMDIMLNGEVLDALSCIVHSERAYTRGRALVEKLRSLIPRQMFEIPVQAAIGNKIIARETVKAMRKDVLAKCYGGDISRKRKLLEKQKEGKRRMKQVGNVEIPQEAFMAVLSIEE.

Residues 6–188 form the tr-type G domain; that stretch reads NRIRNFCIIA…QVVTKIAPPK (183 aa). Residues 18–23 and 135–138 each bind GTP; these read DHGKST and NKID.

Belongs to the TRAFAC class translation factor GTPase superfamily. Classic translation factor GTPase family. LepA subfamily.

It localises to the cell membrane. The enzyme catalyses GTP + H2O = GDP + phosphate + H(+). Its function is as follows. Required for accurate and efficient protein synthesis under certain stress conditions. May act as a fidelity factor of the translation reaction, by catalyzing a one-codon backward translocation of tRNAs on improperly translocated ribosomes. Back-translocation proceeds from a post-translocation (POST) complex to a pre-translocation (PRE) complex, thus giving elongation factor G a second chance to translocate the tRNAs correctly. Binds to ribosomes in a GTP-dependent manner. The protein is Elongation factor 4 of Desulforamulus reducens (strain ATCC BAA-1160 / DSM 100696 / MI-1) (Desulfotomaculum reducens).